We begin with the raw amino-acid sequence, 210 residues long: Troponin I, cardiac muscle (210 aa).

Positions 1–43 (MADGSSDAAREPRPAPAPIRRRSSNYRAYATEPHAKKKSKISA) are disordered. A2 is modified (N-acetylalanine). S5 and S6 each carry phosphoserine. Phosphoserine; by PKA and PKD/PRKD1 occurs at positions 23 and 24. Y26 is subject to Phosphotyrosine. T31 is subject to Phosphothreonine; by STK4/MST1. The interval 32 to 79 (EPHAKKKSKISASRKLQLKTLLLQIAKQELEREAEERRGEKGRALSTR) is involved in binding TNC. 2 positions are modified to phosphoserine; by PKC/PRKCE: S42 and S44. At T51 the chain carries Phosphothreonine; by STK4/MST1. A Phosphoserine modification is found at S77. Phosphothreonine is present on T78. Phosphothreonine; by STK4/MST1 is present on residues T129 and T143. Positions 129-149 (TQKIFDLRGKFKRPTLRRVRI) are involved in binding TNC and actin. A Phosphoserine; by PAK3 modification is found at S150. S166 carries the phosphoserine modification. Position 181 is a phosphothreonine (T181). A Phosphoserine modification is found at S199.

The protein belongs to the troponin I family. Binds to actin and tropomyosin. Interacts with TRIM63. Interacts with STK4/MST1. Post-translationally, phosphorylated at Ser-42 and Ser-44 by PRKCE; phosphorylation increases myocardium contractile dysfunction. Phosphorylated at Ser-23 and Ser-24 by PRKD1; phosphorylation reduces myofilament calcium sensitivity. Phosphorylated preferentially at Thr-31. Phosphorylation by STK4/MST1 alters its binding affinity to TNNC1 (cardiac Tn-C) and TNNT2 (cardiac Tn-T).

In terms of biological role, troponin I is the inhibitory subunit of troponin, the thin filament regulatory complex which confers calcium-sensitivity to striated muscle actomyosin ATPase activity. The polypeptide is Troponin I, cardiac muscle (TNNI3) (Homo sapiens (Human)).